Reading from the N-terminus, the 616-residue chain is Dihydroxy-acid dehydratase (616 aa).

D81 is a Mg(2+) binding site. C122 contacts [2Fe-2S] cluster. Mg(2+)-binding residues include D123 and K124. K124 bears the N6-carboxylysine mark. [2Fe-2S] cluster is bound at residue C195. E491 is a Mg(2+) binding site. S517 acts as the Proton acceptor in catalysis.

Belongs to the IlvD/Edd family. As to quaternary structure, homodimer. [2Fe-2S] cluster serves as cofactor. It depends on Mg(2+) as a cofactor.

It carries out the reaction (2R)-2,3-dihydroxy-3-methylbutanoate = 3-methyl-2-oxobutanoate + H2O. The enzyme catalyses (2R,3R)-2,3-dihydroxy-3-methylpentanoate = (S)-3-methyl-2-oxopentanoate + H2O. It functions in the pathway amino-acid biosynthesis; L-isoleucine biosynthesis; L-isoleucine from 2-oxobutanoate: step 3/4. Its pathway is amino-acid biosynthesis; L-valine biosynthesis; L-valine from pyruvate: step 3/4. In terms of biological role, functions in the biosynthesis of branched-chain amino acids. Catalyzes the dehydration of (2R,3R)-2,3-dihydroxy-3-methylpentanoate (2,3-dihydroxy-3-methylvalerate) into 2-oxo-3-methylpentanoate (2-oxo-3-methylvalerate) and of (2R)-2,3-dihydroxy-3-methylbutanoate (2,3-dihydroxyisovalerate) into 2-oxo-3-methylbutanoate (2-oxoisovalerate), the penultimate precursor to L-isoleucine and L-valine, respectively. This chain is Dihydroxy-acid dehydratase, found in Sodalis glossinidius (strain morsitans).